Consider the following 225-residue polypeptide: Respiratory nitrate reductase 1 gamma chain (225 aa).

Position 1 is an N-formylmethionine (M1). Topologically, residues 1 to 3 (MQF) are periplasmic. Residues 4–29 (LNMFFFDIYPYIAGAVFLIGSWLRYD) traverse the membrane as a helical segment. Topologically, residues 30-47 (YGQYTWRAASSQMLDRKG) are cytoplasmic. The helical transmembrane segment at 48-70 (MNLASNLFHIGILGIFVGHFFGM) threads the bilayer. 2 residues coordinate heme b: H56 and H66. Over 71–82 (LTPHWMYEAWLP) the chain is Periplasmic. Residues 83-112 (IEVKQKMAMFAGGASGVLCLIGGVLLLKRR) form a helical membrane-spanning segment. Over 113 to 124 (LFSPRVRATTTG) the chain is Cytoplasmic. The chain crosses the membrane as a helical span at residues 125–148 (ADILILSLLVIQCALGLLTIPFSA). Over 149–182 (QHMDGSEMMKLVGWAQSVVTFHGGASQHLDGVAF) the chain is Periplasmic. A helical membrane pass occupies residues 183–198 (IFRLHLVLGMTLFLLF). Heme b-binding residues include H187 and H205. Topologically, residues 199–225 (PFSRLIHIWSVPVEYLTRKYQLVRARH) are cytoplasmic.

Dimer of heterotrimers each composed of an alpha, a beta and a gamma chain. Alpha and beta are catalytic chains; gamma chains are involved in binding the enzyme complex to the cytoplasmic membrane. Requires heme as cofactor.

It is found in the cell inner membrane. The catalysed reaction is nitrate + a quinol = a quinone + nitrite + H2O. Functionally, the nitrate reductase enzyme complex allows E.coli to use nitrate as an electron acceptor during anaerobic growth. The gamma chain is a membrane-embedded heme-iron unit resembling cytochrome b, which transfers electrons from quinones to the beta subunit. This Escherichia coli (strain K12) protein is Respiratory nitrate reductase 1 gamma chain (narI).